Consider the following 380-residue polypeptide: Acid phosphatase-like protein XcAP-3 (380 aa).

The first 19 residues, 1-19, serve as a signal peptide directing secretion; that stretch reads MKATILLFLVLAVVQLSTA. Disulfide bonds link cysteine 147/cysteine 374, cysteine 167/cysteine 221, and cysteine 347/cysteine 351.

It belongs to the histidine acid phosphatase family.

The protein resides in the secreted. Probably modulates blood feeding of fleas on vertebrate species by binding and sequestering different mediators involved in the host response. Binds histamine. Binds leukotriene C4. Does not bind serotonin, adrenaline, noradrenaline, leukotriene B4, leukotriene D4, leukotriene E4, ADP, and stable analogs of thromboxane A2: U-46619 and cTXA2. This is Acid phosphatase-like protein XcAP-3 from Xenopsylla cheopis (Oriental rat flea).